The primary structure comprises 302 residues: 4-diphosphocytidyl-2-C-methyl-D-erythritol kinase (302 aa).

Residue lysine 27 is part of the active site. 110–120 contributes to the ATP binding site; sequence PMGGGVGGGSS. The active site involves aspartate 152.

This sequence belongs to the GHMP kinase family. IspE subfamily.

It catalyses the reaction 4-CDP-2-C-methyl-D-erythritol + ATP = 4-CDP-2-C-methyl-D-erythritol 2-phosphate + ADP + H(+). It participates in isoprenoid biosynthesis; isopentenyl diphosphate biosynthesis via DXP pathway; isopentenyl diphosphate from 1-deoxy-D-xylulose 5-phosphate: step 3/6. Its function is as follows. Catalyzes the phosphorylation of the position 2 hydroxy group of 4-diphosphocytidyl-2C-methyl-D-erythritol. The polypeptide is 4-diphosphocytidyl-2-C-methyl-D-erythritol kinase (Mannheimia succiniciproducens (strain KCTC 0769BP / MBEL55E)).